A 395-amino-acid polypeptide reads, in one-letter code: GDP-mannose 4,6 dehydratase (395 aa).

Polar residues-rich tracts occupy residues 1-13 (MLNTRLIAMSTSD) and 24-36 (ESSSNGSKDQNGT). Positions 1–44 (MLNTRLIAMSTSDGAPETKKQRPESSSNGSKDQNGTEAGAEGDS) are disordered. NADP(+) contacts are provided by residues 53 to 58 (GITGQD), 109 to 110 (DM), 131 to 135 (LAAQS), and Tyr146. Residue Thr178 is part of the active site. Active-site nucleophile residues include Glu180 and Tyr202. Lys206, His232, and Arg237 together coordinate NADP(+).

The protein belongs to the NAD(P)-dependent epimerase/dehydratase family. GDP-mannose 4,6-dehydratase subfamily. NADP(+) serves as cofactor.

It carries out the reaction GDP-alpha-D-mannose = GDP-4-dehydro-alpha-D-rhamnose + H2O. The protein operates within nucleotide-sugar biosynthesis; GDP-L-fucose biosynthesis via de novo pathway; GDP-L-fucose from GDP-alpha-D-mannose: step 1/2. Catalyzes the conversion of GDP-D-mannose to GDP-4-dehydro-6-deoxy-D-mannose (also known as GDP-4-keto-6-deoxy-D-mannose or GDP-4-dehydro-alpha-D-rhamnose), an essential step in the synthesis of GDP-fucose from GDP-mannose. The polypeptide is GDP-mannose 4,6 dehydratase (Gmd) (Drosophila melanogaster (Fruit fly)).